The following is a 936-amino-acid chain: Myocardin-related transcription factor A (936 aa).

RPEL repeat units lie at residues 15 to 40 (TVLQ…PPLK), 59 to 84 (DYLK…EETS), and 103 to 128 (DDLN…PVET). The Bipartite Nuclear localization signal signature appears at 62–100 (KRKIRSRPERAELVRMHILEETSAEPSLQAKQIKLKRAR). Disordered regions lie at residues 146–185 (SSFD…TQIP), 234–258 (SQPK…KVKK), and 401–422 (SQDP…QAKP). Residues 160–170 (QPASQESQGSI) are compositionally biased toward polar residues. Over residues 239-254 (SFEKSQRIKKPKEPKP) the composition is skewed to basic and acidic residues. Residues 368-402 (LDEMKVAELKLELKHRGLPVSGTKIDLIERLKASQ) enclose the SAP domain. The span at 404-416 (PSTATAASAKPTP) shows a compositional bias: low complexity. Residues 497 to 542 (DARDKDLMLREKDRQIEELTQRLKQKQELVERLRQQLEQEKRTPQH) are a coiled coil. A disordered region spans residues 707–755 (HNESPATPPQQPEPEPPPHSIFLTHSSPQWSKNPPGYDEAMKQQPNSCE). Over residues 712-725 (ATPPQQPEPEPPPH) the composition is skewed to pro residues. Over residues 729 to 738 (LTHSSPQWSK) the composition is skewed to polar residues.

As to quaternary structure, interacts with srf, forming the srf-mrtfa nuclear complex which binds the 5'-CArG-3' consensus motif (CArG box) on DNA via srf. Interacts (via RPEL repeats) with globular actin (G-actin), thereby regulating its subcellular location and activity of the complex formed with srf.

It is found in the cytoplasm. It localises to the nucleus. Functionally, transcription coactivator that associates with the serum response factor (srf) transcription factor to control expression of genes regulating the cytoskeleton during development, morphogenesis and cell migration. The srf-mrtfa complex activity responds to Rho GTPase-induced changes in cellular globular actin (G-actin) concentration, thereby coupling cytoskeletal gene expression to cytoskeletal dynamics. Mrtfa binds G-actin via its RPEL repeats, regulating activity of the mrtfa-srf complex. Activity is also regulated by filamentous actin (F-actin) in the nucleus. This Xenopus laevis (African clawed frog) protein is Myocardin-related transcription factor A (mrtfa).